A 403-amino-acid polypeptide reads, in one-letter code: Interferon-induced protein with tetratricopeptide repeats 3 (403 aa).

TPR repeat units follow at residues 94–127 (LVTW…CQKF), 136–169 (PELE…KPKD), 172–206 (CSSG…NPQN), and 241–274 (TDVL…TVNN).

Belongs to the IFIT family. Component of an interferon-dependent multiprotein complex, at least composed of IFIT1, IFIT2 and IFIT3. Interacts with IFIT1 and IFIT2. Interacts (via N-terminus) with MAVS, TBK1, TRAF6 and RIGI. Interacts with COPS5.

It is found in the cytoplasm. The protein localises to the mitochondrion. Its function is as follows. IFN-induced antiviral protein which acts as an inhibitor of cellular as well as viral processes, cell migration, proliferation, signaling, and viral replication. Enhances MAVS-mediated host antiviral responses by serving as an adapter bridging TBK1 to MAVS which leads to the activation of TBK1 and phosphorylation of IRF3 and phosphorylated IRF3 translocates into nucleus to promote antiviral gene transcription. Exhibits an antiproliferative activity via the up-regulation of cell cycle negative regulators CDKN1A/p21 and CDKN1B/p27. Normally, CDKN1B/p27 turnover is regulated by COPS5, which binds CDKN1B/p27 in the nucleus and exports it to the cytoplasm for ubiquitin-dependent degradation. IFIT3 sequesters COPS5 in the cytoplasm, thereby increasing nuclear CDKN1B/p27 protein levels. Up-regulates CDKN1A/p21 by down-regulating MYC, a repressor of CDKN1A/p21. Can negatively regulate the apoptotic effects of IFIT2. This is Interferon-induced protein with tetratricopeptide repeats 3 (Ifit3) from Mus musculus (Mouse).